Consider the following 63-residue polypeptide: Beta-defensin 3 (63 aa).

The first 20 residues, 1-20 (MRIHYLLFAFLLVLLSPPAA), serve as a signal peptide directing secretion. Positions 21–22 (FS) are excised as a propeptide. 3 disulfide bridges follow: Cys-31–Cys-59, Cys-38–Cys-52, and Cys-42–Cys-60.

The protein belongs to the beta-defensin family. LAP/TAP subfamily. In terms of tissue distribution, highest expression in salivary glands, epididymis, ovary and pancreas and to a lesser extent in lung, liver and brain. Low or no expression in skeletal muscle and tongue.

The protein localises to the secreted. Its function is as follows. Antimicrobial activity against Gram-negative bacteria E.coli and P.aeruginosa. The protein is Beta-defensin 3 (Defb3) of Mus musculus (Mouse).